We begin with the raw amino-acid sequence, 381 residues long: Pyrimidine monooxygenase RutA (381 aa).

FMN contacts are provided by residues 66 to 67 (IK), asparagine 132, glutamate 141, 157 to 158 (RY), and serine 207.

The protein belongs to the NtaA/SnaA/DszA monooxygenase family. RutA subfamily.

It catalyses the reaction uracil + FMNH2 + NADH + O2 = (Z)-3-ureidoacrylate + FMN + NAD(+) + H2O + H(+). It carries out the reaction thymine + FMNH2 + NADH + O2 = (Z)-2-methylureidoacrylate + FMN + NAD(+) + H2O + H(+). In terms of biological role, catalyzes the pyrimidine ring opening between N-3 and C-4 by an unusual flavin hydroperoxide-catalyzed mechanism, adding oxygen atoms in the process to yield ureidoacrylate peracid, that immediately reacts with FMN forming ureidoacrylate and FMN-N(5)-oxide. The FMN-N(5)-oxide reacts spontaneously with NADH to produce FMN. Requires the flavin reductase RutF to regenerate FMN in vivo. In Methylobacterium radiotolerans (strain ATCC 27329 / DSM 1819 / JCM 2831 / NBRC 15690 / NCIMB 10815 / 0-1), this protein is Pyrimidine monooxygenase RutA.